The sequence spans 789 residues: MAATTANPEMTSDVPSLGPAIASGNSGPGIQGGGAIVQRAIKRRPGLDFDDDGEGNSKFLRCDDDQMSNDKERFARSDDEQSSADKERLARENHSEIERRRRNKMTAYITELSDMVPTCSALARKPDKLTILRMAVSHMKSLRGTGNTSTDGSYKPSFLTDQELKHLILEAADGFLFIVSCETGRVVYVSDSVTPVLNQPQSEWFGSTLYDQVHPDDVDKLREQLSTSENALTGRILDLKTGTVKKEGQQSSMRMCMGSRRSFICRMRCGSSSVDPVSVNRLSFVRNRCRNGLGSVKDGEPHFVVVHCTGYIKAWPPAGVSLPDDDPEAGQGSKFCLVAIGRLQVTSSPNCTDMSNVCQPTEFISRHNIEGIFTFVDHRCVATVGYQPQELLGKNIVEFCHPEDQQLLRDSFQQVVKLKGQVLSVMFRFRSKNQEWLWMRTSSFTFQNPYSDEIEYIICTNTNVKNSSQEPRPTLSNTIQRPQLGPTANLPLEMGSGQLAPRQQQQQTELDMVPGRDGLASYNHSQVVQPVTTTGPEHSKPLEKSDGLFAQDRDPRFSEIYHNINADQSKGISSSTVPATQQLFSQGNTFPPTPRPAENFRNSGLAPPVTIVQPSASAGQMLAQISRHSNPTQGATPTWTPTTRSGFSAQQVATQATAKTRTSQFGVGSFQTPSSFSSMSLPGAPTASPGAAAYPSLTNRGSNFAPETGQTAGQFQTRTAEGVGVWPQWQGQQPHHRSSSSEQHVQQPPAQQPGQPEVFQEMLSMLGDQSNSYNNEEFPDLTMFPPFSE.

Residues 1–14 (MAATTANPEMTSDV) are compositionally biased toward polar residues. Positions 1–97 (MAATTANPEM…RLARENHSEI (97 aa)) are disordered. At alanine 2 the chain carries N-acetylalanine. A compositionally biased stretch (gly residues) spans 26–35 (SGPGIQGGGA). A Glycyl lysine isopeptide (Lys-Gly) (interchain with G-Cter in SUMO2) cross-link involves residue lysine 58. The span at 60-97 (LRCDDDQMSNDKERFARSDDEQSSADKERLARENHSEI) shows a compositional bias: basic and acidic residues. Position 77 is a phosphoserine (serine 77). The interval 88–128 (RLARENHSEIERRRRNKMTAYITELSDMVPTCSALARKPDK) is DNA-binding. Residues 89-142 (LARENHSEIERRRRNKMTAYITELSDMVPTCSALARKPDKLTILRMAVSHMKSL) enclose the bHLH domain. Residues 112-168 (LSDMVPTCSALARKPDKLTILRMAVSHMKSLRGTGNTSTDGSYKPSFLTDQELKHLI) are required for heterodimer formation with HIF1A. A required for heterodimer formation with EPAS1 region spans residues 112 to 264 (LSDMVPTCSA…MCMGSRRSFI (153 aa)). 2 PAS domains span residues 161–235 (DQEL…LTGR) and 349–419 (PNCT…VKLK). Residues 167–171 (LILEA) are mediates the transcription activity and dimerization of the AHR:ARNT complex. The PAC domain occupies 424–467 (SVMFRFRSKNQEWLWMRTSSFTFQNPYSDEIEYIICTNTNVKNS). Over residues 465-481 (KNSSQEPRPTLSNTIQR) the composition is skewed to polar residues. Disordered stretches follow at residues 465-492 (KNSSQEPRPTLSNTIQRPQLGPTANLPL) and 672-789 (TPSS…PFSE). Residues 672-696 (TPSSFSSMSLPGAPTASPGAAAYPS) are compositionally biased toward low complexity. The span at 708 to 719 (TGQTAGQFQTRT) shows a compositional bias: polar residues. 2 stretches are compositionally biased toward low complexity: residues 723-733 (VGVWPQWQGQQ) and 743-756 (QHVQQPPAQQPGQP).

Monomer. Homodimer only upon binding to a DNA. Efficient DNA binding requires dimerization with another bHLH protein. Interacts with TACC3. Interacts with HIF1A, EPAS1, NPAS1 and NPAS3; forms a heterodimer that binds core DNA sequence 5'-TACGTG-3' within the hypoxia response element (HRE) of target gene promoters. Forms a heterodimer with AHRR, as well as with other bHLH proteins. Interacts with NOCA7. Interacts with TACC3. Interacts with AHR; the heterodimer ARNT:AHR binds to core DNA sequence 5'-TGCGTG-3' within the dioxin response element (DRE) of target gene promoters and activates their transcription. Interacts with SIM1 and NPAS4.

It localises to the nucleus. Required for activity of the AHR. Upon ligand binding, AHR translocates into the nucleus, where it heterodimerizes with ARNT and induces transcription by binding to xenobiotic response elements (XRE). Not required for the ligand-binding subunit to translocate from the cytosol to the nucleus after ligand binding. The complex initiates transcription of genes involved in the regulation of a variety of biological processes, including angiogenesis, hematopoiesis, drug and lipid metabolism, cell motility and immune modulation. The heterodimer binds to core DNA sequence 5'-TACGTG-3' within the hypoxia response element (HRE) of target gene promoters and functions as a transcriptional regulator of the adaptive response to hypoxia. The heterodimer ARNT:AHR binds to core DNA sequence 5'-TGCGTG-3' within the dioxin response element (DRE) of target gene promoters and activates their transcription. The sequence is that of Aryl hydrocarbon receptor nuclear translocator from Homo sapiens (Human).